A 600-amino-acid chain; its full sequence is Proline--tRNA ligase (600 aa).

It belongs to the class-II aminoacyl-tRNA synthetase family. ProS type 1 subfamily. In terms of assembly, homodimer.

The protein localises to the cytoplasm. The catalysed reaction is tRNA(Pro) + L-proline + ATP = L-prolyl-tRNA(Pro) + AMP + diphosphate. Its function is as follows. Catalyzes the attachment of proline to tRNA(Pro) in a two-step reaction: proline is first activated by ATP to form Pro-AMP and then transferred to the acceptor end of tRNA(Pro). As ProRS can inadvertently accommodate and process non-cognate amino acids such as alanine and cysteine, to avoid such errors it has two additional distinct editing activities against alanine. One activity is designated as 'pretransfer' editing and involves the tRNA(Pro)-independent hydrolysis of activated Ala-AMP. The other activity is designated 'posttransfer' editing and involves deacylation of mischarged Ala-tRNA(Pro). The misacylated Cys-tRNA(Pro) is not edited by ProRS. The protein is Proline--tRNA ligase of Synechococcus sp. (strain ATCC 27144 / PCC 6301 / SAUG 1402/1) (Anacystis nidulans).